The sequence spans 231 residues: Large ribosomal subunit protein uL1 (231 aa).

It belongs to the universal ribosomal protein uL1 family. In terms of assembly, part of the 50S ribosomal subunit.

Binds directly to 23S rRNA. The L1 stalk is quite mobile in the ribosome, and is involved in E site tRNA release. In terms of biological role, protein L1 is also a translational repressor protein, it controls the translation of the L11 operon by binding to its mRNA. This Nitrosococcus oceani (strain ATCC 19707 / BCRC 17464 / JCM 30415 / NCIMB 11848 / C-107) protein is Large ribosomal subunit protein uL1.